The chain runs to 359 residues: UPF0283 membrane protein RHECIAT_CH0002430 (359 aa).

A disordered region spans residues 1–50 (MSKPPSDPPRRPPAAFAYEDEASEPRNSGRQQQGRRKPESFSENIVVTPD). 2 helical membrane passes run 77 to 97 (FGKI…GLWT) and 111 to 131 (LGYA…ALVI).

Belongs to the UPF0283 family.

The protein resides in the cell inner membrane. This is UPF0283 membrane protein RHECIAT_CH0002430 from Rhizobium etli (strain CIAT 652).